The primary structure comprises 371 residues: 4-hydroxy-3-methylbut-2-en-1-yl diphosphate synthase (flavodoxin) (371 aa).

4 residues coordinate [4Fe-4S] cluster: Cys-270, Cys-273, Cys-305, and Glu-312.

This sequence belongs to the IspG family. Requires [4Fe-4S] cluster as cofactor.

It carries out the reaction (2E)-4-hydroxy-3-methylbut-2-enyl diphosphate + oxidized [flavodoxin] + H2O + 2 H(+) = 2-C-methyl-D-erythritol 2,4-cyclic diphosphate + reduced [flavodoxin]. It participates in isoprenoid biosynthesis; isopentenyl diphosphate biosynthesis via DXP pathway; isopentenyl diphosphate from 1-deoxy-D-xylulose 5-phosphate: step 5/6. Converts 2C-methyl-D-erythritol 2,4-cyclodiphosphate (ME-2,4cPP) into 1-hydroxy-2-methyl-2-(E)-butenyl 4-diphosphate. The polypeptide is 4-hydroxy-3-methylbut-2-en-1-yl diphosphate synthase (flavodoxin) (Psychrobacter arcticus (strain DSM 17307 / VKM B-2377 / 273-4)).